Here is a 355-residue protein sequence, read N- to C-terminus: NADH-quinone oxidoreductase subunit H (355 aa).

The next 8 membrane-spanning stretches (helical) occupy residues 25–45, 91–111, 126–146, 170–190, 205–225, 253–273, 290–310, and 330–350; these read VVRILVVSVVILLCVAYLILW, WLYLIAPIMTVVPAFAVWAVI, LLYAMAISSIGVYAVILAGWA, MGFALVLVLMTAGSLNLSEIV, FLSWNWLPLLPAFVVYFISGI, MAFALFFLAEYINMIVISALA, FIPGIFWLVLKVFALLSVFIW, and VFLPVTVIWVVVVGCWMMSPL.

It belongs to the complex I subunit 1 family. In terms of assembly, NDH-1 is composed of 14 different subunits. Subunits NuoA, H, J, K, L, M, N constitute the membrane sector of the complex.

It localises to the cell inner membrane. The enzyme catalyses a quinone + NADH + 5 H(+)(in) = a quinol + NAD(+) + 4 H(+)(out). NDH-1 shuttles electrons from NADH, via FMN and iron-sulfur (Fe-S) centers, to quinones in the respiratory chain. The immediate electron acceptor for the enzyme in this species is believed to be ubiquinone. Couples the redox reaction to proton translocation (for every two electrons transferred, four hydrogen ions are translocated across the cytoplasmic membrane), and thus conserves the redox energy in a proton gradient. This subunit may bind ubiquinone. The chain is NADH-quinone oxidoreductase subunit H from Burkholderia cenocepacia (strain ATCC BAA-245 / DSM 16553 / LMG 16656 / NCTC 13227 / J2315 / CF5610) (Burkholderia cepacia (strain J2315)).